Reading from the N-terminus, the 502-residue chain is MLLRSAGKLNVGTKKEDGESTAPTPRPKVLRCKCHHHCPEDSVNNICSTDGYCFTMIEEDDSGLPVVTSGCLGLEGSDFQCRDTPIPHQRRSIECCTERNECNKDLHPTLPPLKNRDFVDGPIHHRALLISVTVCSLLLVLIILFCYFRYKRQETRPRYSIGLEQDETYIPPGESLRDLIEQSQSSGSGSGLPLLVQRTIAKQIQMVKQIGKGRYGEVWMGKWRGEKVAVKVFFTTEEASWFRETEIYQTVLMRHENILGFIAADIKGTGSWTQLYLITDYHENGSLYDYLKSTTLDAKSMLKLAYSSVSGLCHLHTEIFSTQGKPAIAHRDLKSKNILVKKNGTCCIADLGLAVKFISDTNEVDIPPNTRVGTKRYMPPEVLDESLNRNHFQSYIMADMYSFGLILWEVARRCVSGGIVEEYQLPYHDLVPSDPSYEDMREIVCIKKLRPSFPNRWSSDECLRQMGKLMTECWAHNPASRLTALRVKKTLAKMSESQDIKL.

The first 13 residues, 1 to 13 (MLLRSAGKLNVGT), serve as a signal peptide directing secretion. A disordered region spans residues 1-25 (MLLRSAGKLNVGTKKEDGESTAPTP). The Extracellular segment spans residues 14-126 (KKEDGESTAP…DFVDGPIHHR (113 aa)). 5 disulfides stabilise this stretch: Cys-32/Cys-53, Cys-34/Cys-38, Cys-47/Cys-71, Cys-81/Cys-95, and Cys-96/Cys-102. A helical transmembrane segment spans residues 127–148 (ALLISVTVCSLLLVLIILFCYF). Over 149–502 (RYKRQETRPR…KMSESQDIKL (354 aa)) the chain is Cytoplasmic. A GS domain is found at 174–203 (ESLRDLIEQSQSSGSGSGLPLLVQRTIAKQ). The Protein kinase domain maps to 204 to 494 (IQMVKQIGKG…LRVKKTLAKM (291 aa)). Residues 210–218 (IGKGRYGEV) and Lys-231 contribute to the ATP site. Catalysis depends on Asp-332, which acts as the Proton acceptor.

This sequence belongs to the protein kinase superfamily. TKL Ser/Thr protein kinase family. TGFB receptor subfamily. In terms of assembly, interacts with high affinity with GDF5; positively regulates chondrocyte differentiation. Interacts with SCUBE3. Interacts with TSC22D1/TSC-22. Interacts with TGFBR3. Mg(2+) is required as a cofactor. Requires Mn(2+) as cofactor. In terms of processing, autophosphorylated.

The protein resides in the cell membrane. It carries out the reaction L-threonyl-[receptor-protein] + ATP = O-phospho-L-threonyl-[receptor-protein] + ADP + H(+). It catalyses the reaction L-seryl-[receptor-protein] + ATP = O-phospho-L-seryl-[receptor-protein] + ADP + H(+). In terms of biological role, on ligand binding, forms a receptor complex consisting of two type II and two type I transmembrane serine/threonine kinases. Type II receptors phosphorylate and activate type I receptors which autophosphorylate, then bind and activate SMAD transcriptional regulators. Receptor for BMP7/OP-1 and GDF5. Positively regulates chondrocyte differentiation through GDF5 interaction. The polypeptide is Bone morphogenetic protein receptor type-1B (BMPR1B) (Homo sapiens (Human)).